A 428-amino-acid polypeptide reads, in one-letter code: Gamma-glutamyl phosphate reductase (428 aa).

This sequence belongs to the gamma-glutamyl phosphate reductase family.

The protein resides in the cytoplasm. The enzyme catalyses L-glutamate 5-semialdehyde + phosphate + NADP(+) = L-glutamyl 5-phosphate + NADPH + H(+). Its pathway is amino-acid biosynthesis; L-proline biosynthesis; L-glutamate 5-semialdehyde from L-glutamate: step 2/2. Its function is as follows. Catalyzes the NADPH-dependent reduction of L-glutamate 5-phosphate into L-glutamate 5-semialdehyde and phosphate. The product spontaneously undergoes cyclization to form 1-pyrroline-5-carboxylate. This Clostridium tetani (strain Massachusetts / E88) protein is Gamma-glutamyl phosphate reductase.